An 857-amino-acid polypeptide reads, in one-letter code: MDIRKTFLDYFQSKGHKLVPSSPLVPDDPTLMFTNAGMVQFKNIFTGEAPIPNPPRATSSQTCLRAGGKHNDLDNVGYTARHHTLFEMLGNFSFADYFKEDAIAYAWEFVTDEKYLDLPVEKIWVTVHDSDDEAYDIWKKYISEDRIMRFGDKDNFWQMGDTGPCGPCSEIFYDQGAEHFHSEEDVMGGEGDRFLEIWNLVFMQYERDEKGTLNPLPKPSIDTGMGLERVVAIKEGVFNNYHSSLFMPFLEKIGELVGKPYDFDAPNSASYRVIADHLRSVSFLLAQGVNFDKEGRGYVLRRIMRRAIRHGYLLGLREPFMYKLVDTLVDLMGKQYDYLASRAEAIKTSMKMEEERFFETIEAGIKLFNEELKNTQDVFNGEVAFKLYDTFGFPLDLTEDMLREKNIRLDIDAFNKKMEAQKAQSKANWKGTGDAATTGDFKLLKEEFNTNEFVGYETQEVTTKVLALLDENFKKTDAINGKGWVLLEKTPFYAESGGQVGDKGKLEIRNEKLEIRVLDTKKFLDMNLSEVEGKLSVGDEVKAVVDPSRVEIEKHHSATHLLHAGLRAILGDHIAQAGSLNDDKRLRFDFSHPKAMTAEEIEKVEAWVNDKISRAIPRKTEIMSVDEAKKAGAMALFGEKYGNEVRVVSMGDASIELCGGTHVDNTAQIGLFMITKESGVSAGVRRIEAICGRAAVEKVKALREELSQIKEEVKNQNPIAGIAKLKEQIKTLKSEVASAMSASQKELSTVNVNGVNVIVEEVQTGDIKSMIDDVKNKYDNVAVMLFQKKGDKVLLAAGSKNTPIKAGDWIKAIAPIVGGGGGGRPDFAQAGGKDASRITTALEEAKVYLSEILEGGN.

Residues histidine 556, histidine 560, cysteine 658, and histidine 662 each coordinate Zn(2+).

Belongs to the class-II aminoacyl-tRNA synthetase family. Zn(2+) serves as cofactor.

Its subcellular location is the cytoplasm. It carries out the reaction tRNA(Ala) + L-alanine + ATP = L-alanyl-tRNA(Ala) + AMP + diphosphate. In terms of biological role, catalyzes the attachment of alanine to tRNA(Ala) in a two-step reaction: alanine is first activated by ATP to form Ala-AMP and then transferred to the acceptor end of tRNA(Ala). Also edits incorrectly charged Ser-tRNA(Ala) and Gly-tRNA(Ala) via its editing domain. The protein is Alanine--tRNA ligase of Sulfurovum sp. (strain NBC37-1).